The chain runs to 147 residues: UPF0306 protein YhbP (147 aa).

It belongs to the UPF0306 family.

This chain is UPF0306 protein YhbP, found in Escherichia coli O7:K1 (strain IAI39 / ExPEC).